Consider the following 351-residue polypeptide: Putative F-box protein At4g09790 (351 aa).

An F-box domain is found at 1 to 51; the sequence is MTTICDLPRDLVARILSRVPLTSMRRVRFTCKRWNTISKDPSFAKTHFGKA.

The chain is Putative F-box protein At4g09790 from Arabidopsis thaliana (Mouse-ear cress).